The primary structure comprises 943 residues: MTDYKATLNLPDTAFPMKAGLPQREPQILQRWDSIGLYGKLREIGKDRPKFVLHDGPPYANGTIHIGHALNKILKDMIIRSKTLSGFDAPYVPGWDCHGLPIEHKVEVTHGKNLGADKTRELCRAYATEQIEGQKTEFIRLGVLGDFANPYKTMNFKNEAGEIRALAEIVKGGFVFKGLKPVNWCFDCGSALAEAEVEYENKKSSTIDVAFPIADEAKLAAAFGLPSLAKPAAIVIWTTTPWTIPANQALNVHPEFTYALVDIGDKLLVLAEELVESCLTRYGVEGTVLATAPGSALELINFRHPFYDRLSPVYLADYVELGAGTGVVHSAPAYGVDDFVTCKKYGMVNDDILNPVQSNGVYVPSLEFFGGQFIWKANPAIVDKLTEVGALLHTTVIEHSYMHCWRHKTPLIYRATAQWFIGMDKEPVSGDTLRVRSLKAIEDTKFVPAWGQARLHSMIANRPDWCISRQRNWGVPIPFFLNKESGELHPRTVELMEEVAKRVEVEGIEAWFKLDAAELLGDEAPQYDKISDTLDVWFDSGTTHWHVLRGSHPMGHETGPRADLYLEGSDQHRGWFHSSLLTGCAIDNHAPYRELLTHGFTVDESGRKMSKSLGNVIAPQKVNDTLGADIMRLWVASTDYSGEMAVSEQILQRSADAYRRIRNTARFLLSNLTGFNPATDLLPAEDMLALDRWAVDRTLLLQRELQEHYGEYRFWNVYSKIHNFCVQELGGFYLDIIKDRQYTTGADSKARRSCQTALFHISEALVRWIAPILAFTADELWQYLPGERNESVMLNTWYEGLTELPEGFELGREYWDRIMEVKVAVNKEMEIQRAAKAVGGNLQAEVTLFAEDALTADLAKLSNELRFVLITSTATVAPFVQAPADAVATEVSGLKLKIVKSAFPKCARCWHCREDVGVNPEHPEICGRCVDNIDGAGEVRHYA.

The 'HIGH' region signature appears at Pro58 to His68. Glu567 provides a ligand contact to L-isoleucyl-5'-AMP. Positions Lys608–Ser612 match the 'KMSKS' region motif. ATP is bound at residue Lys611. 4 residues coordinate Zn(2+): Cys906, Cys909, Cys926, and Cys929.

This sequence belongs to the class-I aminoacyl-tRNA synthetase family. IleS type 1 subfamily. In terms of assembly, monomer. Zn(2+) serves as cofactor.

The protein localises to the cytoplasm. The enzyme catalyses tRNA(Ile) + L-isoleucine + ATP = L-isoleucyl-tRNA(Ile) + AMP + diphosphate. In terms of biological role, catalyzes the attachment of isoleucine to tRNA(Ile). As IleRS can inadvertently accommodate and process structurally similar amino acids such as valine, to avoid such errors it has two additional distinct tRNA(Ile)-dependent editing activities. One activity is designated as 'pretransfer' editing and involves the hydrolysis of activated Val-AMP. The other activity is designated 'posttransfer' editing and involves deacylation of mischarged Val-tRNA(Ile). The sequence is that of Isoleucine--tRNA ligase from Pseudomonas fluorescens (strain Pf0-1).